We begin with the raw amino-acid sequence, 131 residues long: Small ribosomal subunit protein uS9 (131 aa).

This sequence belongs to the universal ribosomal protein uS9 family.

In Glaesserella parasuis serovar 5 (strain SH0165) (Haemophilus parasuis), this protein is Small ribosomal subunit protein uS9.